Consider the following 115-residue polypeptide: NADH-ubiquinone oxidoreductase chain 3 (115 aa).

The next 3 helical transmembrane spans lie at I4–L24, F55–L75, and M84–Y104.

This sequence belongs to the complex I subunit 3 family. In terms of assembly, core subunit of respiratory chain NADH dehydrogenase (Complex I) which is composed of 45 different subunits. Interacts with TMEM186. Interacts with TMEM242.

Its subcellular location is the mitochondrion inner membrane. The catalysed reaction is a ubiquinone + NADH + 5 H(+)(in) = a ubiquinol + NAD(+) + 4 H(+)(out). In terms of biological role, core subunit of the mitochondrial membrane respiratory chain NADH dehydrogenase (Complex I) which catalyzes electron transfer from NADH through the respiratory chain, using ubiquinone as an electron acceptor. Essential for the catalytic activity of complex I. This is NADH-ubiquinone oxidoreductase chain 3 from Phyllotis darwinii (Darwin's leaf-eared mouse).